The following is a 122-amino-acid chain: Large ribosomal subunit protein uL18 (122 aa).

It belongs to the universal ribosomal protein uL18 family. As to quaternary structure, part of the 50S ribosomal subunit; part of the 5S rRNA/L5/L18/L25 subcomplex. Contacts the 5S and 23S rRNAs.

Functionally, this is one of the proteins that bind and probably mediate the attachment of the 5S RNA into the large ribosomal subunit, where it forms part of the central protuberance. The polypeptide is Large ribosomal subunit protein uL18 (Prochlorococcus marinus (strain MIT 9515)).